We begin with the raw amino-acid sequence, 328 residues long: Serine/threonine protein kinase RdoA (328 aa).

Aspartate 201 (proton acceptor) is an active-site residue. Positions 206 and 217 each coordinate Mg(2+). The active site involves aspartate 217.

Belongs to the SrkA/RdoA protein kinase family. Monomer. Mg(2+) serves as cofactor.

It localises to the cytoplasm. It carries out the reaction L-seryl-[protein] + ATP = O-phospho-L-seryl-[protein] + ADP + H(+). The enzyme catalyses L-threonyl-[protein] + ATP = O-phospho-L-threonyl-[protein] + ADP + H(+). In terms of biological role, a protein kinase that (auto)phosphorylates on Ser and Thr residues, probably involved in the extracytoplasmic stress response. Probably acts to suppress the effects of stress linked to accumulation of reactive oxygen species. This chain is Serine/threonine protein kinase RdoA, found in Salmonella typhimurium (strain LT2 / SGSC1412 / ATCC 700720).